The primary structure comprises 182 residues: Allergen Bla g 4 (182 aa).

A signal peptide spans alanine 1 to alanine 12. N-linked (GlcNAc...) asparagine glycosylation occurs at asparagine 72.

This sequence belongs to the calycin superfamily. Triabin family.

Its subcellular location is the secreted. Functionally, probable ligand-binding protein. This Blattella germanica (German cockroach) protein is Allergen Bla g 4.